We begin with the raw amino-acid sequence, 64 residues long: Small ribosomal subunit protein bS21 (64 aa).

A disordered region spans residues 42-64 (KKEKEKAAAKKRNKYNKRRSFYY). A compositionally biased stretch (basic residues) spans 50 to 64 (AKKRNKYNKRRSFYY).

Belongs to the bacterial ribosomal protein bS21 family.

The sequence is that of Small ribosomal subunit protein bS21 from Malacoplasma penetrans (strain HF-2) (Mycoplasma penetrans).